A 130-amino-acid chain; its full sequence is MARKRGSSSRKQKKVGFDYGVVHIKSTFNNTIITLTDKDGNTLTWASGGTVGFEGTRKGTPYAAQLAADKVAREALRMGIKKVDILVKGPGPGREPAIRTLQGAGLEINQIKDVTPIPFNGCRPKKRRRV.

It belongs to the universal ribosomal protein uS11 family. As to quaternary structure, part of the 30S ribosomal subunit. Interacts with proteins S7 and S18. Binds to IF-3.

In terms of biological role, located on the platform of the 30S subunit, it bridges several disparate RNA helices of the 16S rRNA. Forms part of the Shine-Dalgarno cleft in the 70S ribosome. The polypeptide is Small ribosomal subunit protein uS11 (Thermotoga petrophila (strain ATCC BAA-488 / DSM 13995 / JCM 10881 / RKU-1)).